The primary structure comprises 306 residues: Curved DNA-binding protein (306 aa).

Residues 5 to 69 (DYYAIMGVKP…QRRAEYDQMW (65 aa)) form the J domain.

The protein resides in the cytoplasm. It localises to the nucleoid. DNA-binding protein that preferentially recognizes a curved DNA sequence. It is probably a functional analog of DnaJ; displays overlapping activities with DnaJ, but functions under different conditions, probably acting as a molecular chaperone in an adaptive response to environmental stresses other than heat shock. Lacks autonomous chaperone activity; binds native substrates and targets them for recognition by DnaK. Its activity is inhibited by the binding of CbpM. In Shigella sonnei (strain Ss046), this protein is Curved DNA-binding protein.